The following is a 185-amino-acid chain: MIVIVTGMPGSGKSKIVKEFEKRGFPSVSLGDIVREETLKRGLELTKENVAKVSIRLRQELGQNAVAKLAVEKVRALLKGSQVVVIDGVRSLDEVGTFRGAFPEENIIIVAVHTPPRQRFERLKARGRHDDPQTWEDFEERDWKELRFGIGGVIAMADYMLVNNGSREEYEAEVKKLVDEIISKL.

7–14 (GMPGSGKS) contributes to the ATP binding site.

The protein belongs to the UPF0200 family.

This is UPF0200 protein TK1334 from Thermococcus kodakarensis (strain ATCC BAA-918 / JCM 12380 / KOD1) (Pyrococcus kodakaraensis (strain KOD1)).